A 101-amino-acid polypeptide reads, in one-letter code: Large ribosomal subunit protein bL21 (101 aa).

Belongs to the bacterial ribosomal protein bL21 family. Part of the 50S ribosomal subunit. Contacts protein L20.

In terms of biological role, this protein binds to 23S rRNA in the presence of protein L20. This Thermus thermophilus (strain ATCC BAA-163 / DSM 7039 / HB27) protein is Large ribosomal subunit protein bL21.